Here is a 431-residue protein sequence, read N- to C-terminus: Enolase (431 aa).

Residue Gln-167 coordinates (2R)-2-phosphoglycerate. Glu-209 serves as the catalytic Proton donor. Residues Asp-246, Glu-290, and Asp-317 each contribute to the Mg(2+) site. Positions 342, 371, 372, and 393 each coordinate (2R)-2-phosphoglycerate. Lys-342 (proton acceptor) is an active-site residue.

Belongs to the enolase family. In terms of assembly, component of the RNA degradosome, a multiprotein complex involved in RNA processing and mRNA degradation. Mg(2+) is required as a cofactor.

Its subcellular location is the cytoplasm. It localises to the secreted. It is found in the cell surface. It carries out the reaction (2R)-2-phosphoglycerate = phosphoenolpyruvate + H2O. It participates in carbohydrate degradation; glycolysis; pyruvate from D-glyceraldehyde 3-phosphate: step 4/5. Catalyzes the reversible conversion of 2-phosphoglycerate (2-PG) into phosphoenolpyruvate (PEP). It is essential for the degradation of carbohydrates via glycolysis. The polypeptide is Enolase (Enterobacter sp. (strain 638)).